Here is a 335-residue protein sequence, read N- to C-terminus: Pyridoxal 5'-phosphate synthase subunit PdxS (335 aa).

D30 serves as a coordination point for D-ribose 5-phosphate. K87 (schiff-base intermediate with D-ribose 5-phosphate) is an active-site residue. G159 contacts D-ribose 5-phosphate. R171 contributes to the D-glyceraldehyde 3-phosphate binding site. D-ribose 5-phosphate-binding positions include G257 and 278–279; that span reads GS.

This sequence belongs to the PdxS/SNZ family. In terms of assembly, in the presence of PdxT, forms a dodecamer of heterodimers.

The catalysed reaction is aldehydo-D-ribose 5-phosphate + D-glyceraldehyde 3-phosphate + L-glutamine = pyridoxal 5'-phosphate + L-glutamate + phosphate + 3 H2O + H(+). It functions in the pathway cofactor biosynthesis; pyridoxal 5'-phosphate biosynthesis. In terms of biological role, catalyzes the formation of pyridoxal 5'-phosphate from ribose 5-phosphate (RBP), glyceraldehyde 3-phosphate (G3P) and ammonia. The ammonia is provided by the PdxT subunit. Can also use ribulose 5-phosphate and dihydroxyacetone phosphate as substrates, resulting from enzyme-catalyzed isomerization of RBP and G3P, respectively. This chain is Pyridoxal 5'-phosphate synthase subunit PdxS, found in Thermococcus gammatolerans (strain DSM 15229 / JCM 11827 / EJ3).